The chain runs to 438 residues: Nucleolar protein 12 (438 aa).

Disordered stretches follow at residues 1 to 28 and 60 to 94; these read MGET…VDPT and ANGV…LNDS. Positions 60–71 are enriched in acidic residues; sequence ANGVEEAAETIE. Residues serine 94 and serine 95 each carry the phosphoserine modification. Residues 108–146 are disordered; sequence AEEDEEKDKDSAGLINDEEDKSPAKQSVLEERTSQEDVK. Positions 135–146 are enriched in basic and acidic residues; the sequence is VLEERTSQEDVK. RRM domains follow at residues 164-262 and 270-348; these read KTVF…SVSH and RCVF…RAKS. 2 stretches are compositionally biased toward basic residues: residues 346–357 and 402–412; these read AKSTKPKSITRS and AKKKVNKKRKE. Disordered stretches follow at residues 346 to 366 and 390 to 438; these read AKST…KTRT and EGHR…KKDK.

The protein belongs to the RRM RBM34 family.

Its subcellular location is the nucleus. The protein resides in the nucleolus. In terms of biological role, involved in pre-25S rRNA processing. The sequence is that of Nucleolar protein 12 (nop12) from Schizosaccharomyces pombe (strain 972 / ATCC 24843) (Fission yeast).